Consider the following 427-residue polypeptide: Sialic acid TRAP transporter large permease protein SiaM (427 aa).

A run of 12 helical transmembrane segments spans residues 11–31 (LLFAGMPVGFSLIFVALAFLI), 52–72 (FTLLAVPFFVLTGHLMNSAGI), 82–102 (SLVGHITGSLGHVNIMASLLF), 140–160 (ASCIIGPLVPPSVPLVIYGVV), 165–185 (IGALFLAGAIPGLLCCIALMV), 214–234 (AFLSLLTPVIIIGGIFSGKFT), 246–266 (ALFLGTVVYNTLTLQGFIEIL), 270–290 (VNTTAVVALMVMGVTVFGWIV), 301–321 (DYFLTISDNPLVLLLLINLLL), 322–342 (LFLGTFIESLALLLLLVPFLV), 348–368 (VGIDPVHFGVMAILNLMIGIL), and 394–414 (VLPLLVPLFIVLALVAVFPQF).

The protein belongs to the TRAP transporter large permease family. In terms of assembly, the complex comprises the extracytoplasmic solute receptor protein SiaP, and the two transmembrane proteins SiaQ and SiaM. SiaQ and SiaM form a tight 1:1 complex.

Its subcellular location is the cell inner membrane. In terms of biological role, part of the tripartite ATP-independent periplasmic (TRAP) transport system SiaPQM that catalyzes unidirectional Na(+)-dependent sialic acid uptake. The protein is Sialic acid TRAP transporter large permease protein SiaM of Vibrio cholerae serotype O1 (strain ATCC 39315 / El Tor Inaba N16961).